The sequence spans 443 residues: Xaa-Pro dipeptidase (443 aa).

The Mn(2+) site is built by Asp244, Asp255, His336, Glu381, and Glu420.

This sequence belongs to the peptidase M24B family. Bacterial-type prolidase subfamily. It depends on Mn(2+) as a cofactor.

The catalysed reaction is Xaa-L-Pro dipeptide + H2O = an L-alpha-amino acid + L-proline. Splits dipeptides with a prolyl residue in the C-terminal position. In Stenotrophomonas maltophilia (strain R551-3), this protein is Xaa-Pro dipeptidase.